A 219-amino-acid polypeptide reads, in one-letter code: Large ribosomal subunit protein uL1 (219 aa).

The protein belongs to the universal ribosomal protein uL1 family. In terms of assembly, component of the large ribosomal subunit.

It localises to the cytoplasm. The chain is Large ribosomal subunit protein uL1 (RPL1) from Encephalitozoon cuniculi (strain GB-M1) (Microsporidian parasite).